Consider the following 249-residue polypeptide: Segregation and condensation protein A (249 aa).

This sequence belongs to the ScpA family. In terms of assembly, component of a cohesin-like complex composed of ScpA, ScpB and the Smc homodimer, in which ScpA and ScpB bind to the head domain of Smc. The presence of the three proteins is required for the association of the complex with DNA.

The protein resides in the cytoplasm. Its function is as follows. Participates in chromosomal partition during cell division. May act via the formation of a condensin-like complex containing Smc and ScpB that pull DNA away from mid-cell into both cell halves. The sequence is that of Segregation and condensation protein A from Listeria innocua serovar 6a (strain ATCC BAA-680 / CLIP 11262).